A 77-amino-acid polypeptide reads, in one-letter code: Acyl carrier protein (77 aa).

The Carrier domain occupies 1-76 (MSIEERVKKI…SAIDYVTKAN (76 aa)). Ser36 bears the O-(pantetheine 4'-phosphoryl)serine mark.

It belongs to the acyl carrier protein (ACP) family. In terms of processing, 4'-phosphopantetheine is transferred from CoA to a specific serine of apo-ACP by AcpS. This modification is essential for activity because fatty acids are bound in thioester linkage to the sulfhydryl of the prosthetic group.

It localises to the cytoplasm. It participates in lipid metabolism; fatty acid biosynthesis. Functionally, carrier of the growing fatty acid chain in fatty acid biosynthesis. The polypeptide is Acyl carrier protein (Actinobacillus pleuropneumoniae serotype 5b (strain L20)).